Here is a 555-residue protein sequence, read N- to C-terminus: Phosphoglucomutase (555 aa).

2 residues coordinate alpha-D-glucose 1,6-bisphosphate: Arg-22 and Ser-114. The Phosphoserine intermediate role is filled by Ser-114. Residues Ser-114, Asp-279, Asp-281, and Asp-283 each coordinate Mg(2+). Ser-114 carries the post-translational modification Phosphoserine. Alpha-D-glucose 1,6-bisphosphate is bound by residues Asp-283, Arg-284, Thr-347, Glu-366, Ser-368, and Lys-379.

This sequence belongs to the phosphohexose mutase family. Monomer. Requires Mg(2+) as cofactor.

It localises to the cytoplasm. The enzyme catalyses alpha-D-glucose 1-phosphate = alpha-D-glucose 6-phosphate. It carries out the reaction O-phospho-L-seryl-[protein] + alpha-D-glucose 1-phosphate = alpha-D-glucose 1,6-bisphosphate + L-seryl-[protein]. The catalysed reaction is alpha-D-glucose 1,6-bisphosphate + L-seryl-[protein] = O-phospho-L-seryl-[protein] + alpha-D-glucose 6-phosphate. Its function is as follows. Catalyzes the reversible isomerization of alpha-D-glucose 1-phosphate to alpha-D-glucose 6-phosphate. The mechanism proceeds via the intermediate compound alpha-D-glucose 1,6-bisphosphate. Key enzyme in hexose metabolism. The reverse reaction is an essential step for biosynthesis because glucose 1-phosphate is the starting point for the synthesis of UDP-glucose, which acts as a precursor for the synthesis of oligosaccharides and trehalose. This Aspergillus fumigatus (strain ATCC MYA-4609 / CBS 101355 / FGSC A1100 / Af293) (Neosartorya fumigata) protein is Phosphoglucomutase (pgmA).